The sequence spans 144 residues: Toxin MT0934 (144 aa).

Functionally, toxic component of a type II toxin-antitoxin (TA) system. Its toxic effect is neutralized by coexpression with cognate antitoxin MT0933. The chain is Toxin MT0934 from Mycobacterium tuberculosis (strain CDC 1551 / Oshkosh).